A 156-amino-acid polypeptide reads, in one-letter code: Small ribosomal subunit protein uS7 (156 aa).

It belongs to the universal ribosomal protein uS7 family. As to quaternary structure, part of the 30S ribosomal subunit. Contacts proteins S9 and S11.

In terms of biological role, one of the primary rRNA binding proteins, it binds directly to 16S rRNA where it nucleates assembly of the head domain of the 30S subunit. Is located at the subunit interface close to the decoding center, probably blocks exit of the E-site tRNA. This Synechococcus elongatus (strain ATCC 33912 / PCC 7942 / FACHB-805) (Anacystis nidulans R2) protein is Small ribosomal subunit protein uS7.